Consider the following 466-residue polypeptide: Ribulose bisphosphate carboxylase large chain (466 aa).

Position 5 is an N6,N6,N6-trimethyllysine (Lys-5). Positions 114 and 164 each coordinate substrate. Catalysis depends on Lys-166, which acts as the Proton acceptor. Lys-168 contributes to the substrate binding site. Lys-192, Asp-194, and Glu-195 together coordinate Mg(2+). Lys-192 carries the post-translational modification N6-carboxylysine. The active-site Proton acceptor is the His-285. Substrate is bound by residues Arg-286, His-318, and Ser-370.

The protein belongs to the RuBisCO large chain family. Type I subfamily. Heterohexadecamer of 8 large chains and 8 small chains; disulfide-linked. The disulfide link is formed within the large subunit homodimers. The cofactor is Mg(2+). The disulfide bond which can form in the large chain dimeric partners within the hexadecamer appears to be associated with oxidative stress and protein turnover.

It is found in the plastid. It localises to the chloroplast. The catalysed reaction is 2 (2R)-3-phosphoglycerate + 2 H(+) = D-ribulose 1,5-bisphosphate + CO2 + H2O. It catalyses the reaction D-ribulose 1,5-bisphosphate + O2 = 2-phosphoglycolate + (2R)-3-phosphoglycerate + 2 H(+). Its function is as follows. RuBisCO catalyzes two reactions: the carboxylation of D-ribulose 1,5-bisphosphate, the primary event in carbon dioxide fixation, as well as the oxidative fragmentation of the pentose substrate in the photorespiration process. Both reactions occur simultaneously and in competition at the same active site. This is Ribulose bisphosphate carboxylase large chain from Betula nigra (River birch).